We begin with the raw amino-acid sequence, 535 residues long: Flavin-containing monooxygenase 1 (535 aa).

Ala2 is subject to N-acetylalanine. Residues 2–513 (AKRVAIVGAG…TRIVQESSSP (512 aa)) lie on the Lumenal side of the membrane. Residues 9 to 13 (GAGVS), Glu32, 40 to 41 (LW), and 61 to 62 (NS) contribute to the FAD site. Residues 60-61 (SN) and 195-198 (SGTD) each bind NADP(+). A helical transmembrane segment spans residues 514-534 (FESLLKLFAVLALLVSVFLIF). A topological domain (cytoplasmic) is located at residue Leu535.

It belongs to the FMO family. Requires FAD as cofactor. Liver.

It localises to the endoplasmic reticulum membrane. It catalyses the reaction hypotaurine + NADPH + O2 + H(+) = taurine + NADP(+) + H2O. The enzyme catalyses hypotaurine + NADH + O2 + H(+) = taurine + NAD(+) + H2O. It carries out the reaction trimethylamine + NADPH + O2 = trimethylamine N-oxide + NADP(+) + H2O. The catalysed reaction is N,N-dimethylaniline + NADPH + O2 + H(+) = N,N-dimethylaniline N-oxide + NADP(+) + H2O. In terms of biological role, broad spectrum monooxygenase that catalyzes the oxygenation of a wide variety of nitrogen- and sulfur-containing compounds including xenobiotics. Catalyzes the S-oxygenation of hypotaurine to produce taurine, an organic osmolyte involved in cell volume regulation as well as a variety of cytoprotective and developmental processes. In vitro, catalyzes the N-oxygenation of trimethylamine (TMA) to produce trimethylamine N-oxide (TMAO) and could therefore participate to the detoxification of this compound that is generated by the action of gut microbiota from dietary precursors such as choline, choline containing compounds, betaine or L-carnitine. The sequence is that of Flavin-containing monooxygenase 1 (FMO1) from Oryctolagus cuniculus (Rabbit).